The sequence spans 403 residues: Riboflavin biosynthesis protein RibBA (403 aa).

The interval 1-204 (MKNKVFASIG…IGELVNYRRR (204 aa)) is DHBP synthase. Residues 30–31 (RE), Asp35, 143–147 (RTGHT), and Glu167 each bind D-ribulose 5-phosphate. Glu31 lines the Mg(2+) pocket. A Mg(2+)-binding site is contributed by His146. Residues 205–403 (TEKFISEIVN…EKMGHMLKKV (199 aa)) form a GTP cyclohydrolase II region. A GTP-binding site is contributed by 255–259 (RVHSS). Positions 260, 271, and 273 each coordinate Zn(2+). Residues Gln276, 298-300 (EGR), and Thr320 each bind GTP. Catalysis depends on Asp332, which acts as the Proton acceptor; for GTP cyclohydrolase activity. The active-site Nucleophile; for GTP cyclohydrolase activity is the Arg334. GTP contacts are provided by Thr355 and Lys360.

In the N-terminal section; belongs to the DHBP synthase family. It in the C-terminal section; belongs to the GTP cyclohydrolase II family. It depends on Mg(2+) as a cofactor. The cofactor is Mn(2+). Zn(2+) is required as a cofactor.

It carries out the reaction D-ribulose 5-phosphate = (2S)-2-hydroxy-3-oxobutyl phosphate + formate + H(+). The catalysed reaction is GTP + 4 H2O = 2,5-diamino-6-hydroxy-4-(5-phosphoribosylamino)-pyrimidine + formate + 2 phosphate + 3 H(+). Its pathway is cofactor biosynthesis; riboflavin biosynthesis; 2-hydroxy-3-oxobutyl phosphate from D-ribulose 5-phosphate: step 1/1. It participates in cofactor biosynthesis; riboflavin biosynthesis; 5-amino-6-(D-ribitylamino)uracil from GTP: step 1/4. Functionally, catalyzes the conversion of D-ribulose 5-phosphate to formate and 3,4-dihydroxy-2-butanone 4-phosphate. In terms of biological role, catalyzes the conversion of GTP to 2,5-diamino-6-ribosylamino-4(3H)-pyrimidinone 5'-phosphate (DARP), formate and pyrophosphate. The chain is Riboflavin biosynthesis protein RibBA from Endomicrobium trichonymphae.